We begin with the raw amino-acid sequence, 425 residues long: Glutamyl-tRNA reductase (425 aa).

Substrate is bound by residues 49 to 52 (TCNR), S107, 112 to 114 (EPQ), and Q118. The Nucleophile role is filled by C50. 187–192 (GAGETI) contributes to the NADP(+) binding site.

Belongs to the glutamyl-tRNA reductase family. In terms of assembly, homodimer.

It catalyses the reaction (S)-4-amino-5-oxopentanoate + tRNA(Glu) + NADP(+) = L-glutamyl-tRNA(Glu) + NADPH + H(+). It participates in porphyrin-containing compound metabolism; protoporphyrin-IX biosynthesis; 5-aminolevulinate from L-glutamyl-tRNA(Glu): step 1/2. Catalyzes the NADPH-dependent reduction of glutamyl-tRNA(Glu) to glutamate 1-semialdehyde (GSA). The sequence is that of Glutamyl-tRNA reductase from Pseudomonas syringae pv. tomato (strain ATCC BAA-871 / DC3000).